Here is a 224-residue protein sequence, read N- to C-terminus: tRNA (guanine-N(7)-)-methyltransferase (224 aa).

Positions 54, 79, 106, and 129 each coordinate S-adenosyl-L-methionine. Residue aspartate 129 is part of the active site. Residues lysine 133 and aspartate 165 each contribute to the substrate site.

Belongs to the class I-like SAM-binding methyltransferase superfamily. TrmB family.

It carries out the reaction guanosine(46) in tRNA + S-adenosyl-L-methionine = N(7)-methylguanosine(46) in tRNA + S-adenosyl-L-homocysteine. The protein operates within tRNA modification; N(7)-methylguanine-tRNA biosynthesis. In terms of biological role, catalyzes the formation of N(7)-methylguanine at position 46 (m7G46) in tRNA. This chain is tRNA (guanine-N(7)-)-methyltransferase, found in Chlamydia felis (strain Fe/C-56) (Chlamydophila felis).